Consider the following 373-residue polypeptide: Chaperone protein DnaJ (373 aa).

The J domain occupies 4–68 (NYYQILGVSK…QKRAAYDRLG (65 aa)). The CR-type zinc finger occupies 136-214 (GIEKNINFSS…CHGMGRYHKQ (79 aa)). 8 residues coordinate Zn(2+): Cys-149, Cys-152, Cys-166, Cys-169, Cys-188, Cys-191, Cys-202, and Cys-205. CXXCXGXG motif repeat units lie at residues 149–156 (CDTCHGSG), 166–173 (CDACSGVG), 188–195 (CHKCQGNG), and 202–209 (CKKCHGMG).

This sequence belongs to the DnaJ family. As to quaternary structure, homodimer. The cofactor is Zn(2+).

It localises to the cytoplasm. Functionally, participates actively in the response to hyperosmotic and heat shock by preventing the aggregation of stress-denatured proteins and by disaggregating proteins, also in an autonomous, DnaK-independent fashion. Unfolded proteins bind initially to DnaJ; upon interaction with the DnaJ-bound protein, DnaK hydrolyzes its bound ATP, resulting in the formation of a stable complex. GrpE releases ADP from DnaK; ATP binding to DnaK triggers the release of the substrate protein, thus completing the reaction cycle. Several rounds of ATP-dependent interactions between DnaJ, DnaK and GrpE are required for fully efficient folding. Also involved, together with DnaK and GrpE, in the DNA replication of plasmids through activation of initiation proteins. This is Chaperone protein DnaJ from Rickettsia rickettsii (strain Iowa).